A 333-amino-acid chain; its full sequence is Ketol-acid reductoisomerase (NADP(+)) (333 aa).

Residues 2–182 form the KARI N-terminal Rossmann domain; that stretch reads ANIYYDDSCD…GGGRAGILET (181 aa). NADP(+) is bound by residues 25–28, Arg48, Ser51, Ser53, and 83–86; these read YGSQ and DTIQ. His108 is a catalytic residue. Gly134 is an NADP(+) binding site. Residues 183 to 331 enclose the KARI C-terminal knotted domain; that stretch reads SFREETETDL…TKLRSMMKWL (149 aa). Residues Asp191, Glu195, Glu227, and Glu231 each contribute to the Mg(2+) site. Ser252 provides a ligand contact to substrate.

It belongs to the ketol-acid reductoisomerase family. Mg(2+) is required as a cofactor.

The enzyme catalyses (2R)-2,3-dihydroxy-3-methylbutanoate + NADP(+) = (2S)-2-acetolactate + NADPH + H(+). It carries out the reaction (2R,3R)-2,3-dihydroxy-3-methylpentanoate + NADP(+) = (S)-2-ethyl-2-hydroxy-3-oxobutanoate + NADPH + H(+). It participates in amino-acid biosynthesis; L-isoleucine biosynthesis; L-isoleucine from 2-oxobutanoate: step 2/4. It functions in the pathway amino-acid biosynthesis; L-valine biosynthesis; L-valine from pyruvate: step 2/4. Involved in the biosynthesis of branched-chain amino acids (BCAA). Catalyzes an alkyl-migration followed by a ketol-acid reduction of (S)-2-acetolactate (S2AL) to yield (R)-2,3-dihydroxy-isovalerate. In the isomerase reaction, S2AL is rearranged via a Mg-dependent methyl migration to produce 3-hydroxy-3-methyl-2-ketobutyrate (HMKB). In the reductase reaction, this 2-ketoacid undergoes a metal-dependent reduction by NADPH to yield (R)-2,3-dihydroxy-isovalerate. This Leptospira biflexa serovar Patoc (strain Patoc 1 / Ames) protein is Ketol-acid reductoisomerase (NADP(+)).